Consider the following 549-residue polypeptide: Putative lipase ATG15 (549 aa).

Topologically, residues 1–19 (MKQDLYKESSPPPSTTKSK) are cytoplasmic. A helical; Signal-anchor for type II membrane protein membrane pass occupies residues 20–42 (GLYVIVAALVTTAIYLLYSQGYS). The Lumenal segment spans residues 43 to 549 (NTHGEKDMPS…SHTVTHVTMA (507 aa)). N-linked (GlcNAc...) asparagine glycans are attached at residues Asn204 and Asn315. Ser331 serves as the catalytic Charge relay system. Residue Asn448 is glycosylated (N-linked (GlcNAc...) asparagine). A disordered region spans residues 474–510 (DDDDKDKKKKKKTSTSSSVVSKTKTSTSSTVATNTMP). Low complexity predominate over residues 487–504 (STSSSVVSKTKTSTSSTV).

This sequence belongs to the AB hydrolase superfamily. Lipase family. In terms of assembly, binds to both phosphatidylinositol (PI) and phosphatidylinositol 3,5-bisphosphate (PIP2).

The protein localises to the endosome. The protein resides in the multivesicular body membrane. Its subcellular location is the prevacuolar compartment membrane. The enzyme catalyses a triacylglycerol + H2O = a diacylglycerol + a fatty acid + H(+). Lipase which is essential for lysis of subvacuolar cytoplasm to vacuole targeted bodies and intravacuolar autophagic bodies. Involved in the lysis of intravacuolar multivesicular body (MVB) vesicles. The intravacuolar membrane disintegration by ATG15 is critical to life span extension. The sequence is that of Putative lipase ATG15 (ATG15) from Yarrowia lipolytica (strain CLIB 122 / E 150) (Yeast).